Consider the following 115-residue polypeptide: MDMKMTFSGLVLVVLVTTVVGSSVRRGENSDNLTHCRLFEFRLCLLECMSLTLDHCYARCTTVITQIHGSDTNRFDCTIFKTCYYRCYVLGKTEDHCWKGTATSVTGDVGDLEFC.

Positions 1–21 are cleaved as a signal peptide; the sequence is MDMKMTFSGLVLVVLVTTVVG. Residues 22 to 26 constitute a propeptide that is removed on maturation; that stretch reads SSVRR. Cystine bridges form between C36–C77, C44–C60, C48–C56, C83–C115, and C87–C97. Zn(2+) is bound at residue E40. H68 serves as a coordination point for Zn(2+).

As to quaternary structure, mostly found as a homodimer in solution; non-covalently bound. As to expression, expressed by the venom duct.

The protein resides in the secreted. In terms of biological role, modestly and reversibly inhibits Cav2.3/CACNA1E (IC(50)=5.8 uM) recombinantly expressed in HEK293 cells without affecting the voltage dependence of activation. In mouse DRG sensory neurons, modulates depolarization-induced calcium influx. This is Macroconotoxin Mu8.1 from Conus mucronatus (Pointed cone).